The primary structure comprises 180 residues: Protein PHLOEM PROTEIN 2-LIKE A9 (180 aa).

A disordered region spans residues 1-21 (MSSQKSSHHKADSKMEQDNNR). Basic and acidic residues predominate over residues 9-21 (HKADSKMEQDNNR).

This chain is Protein PHLOEM PROTEIN 2-LIKE A9 (PP2A9), found in Arabidopsis thaliana (Mouse-ear cress).